Here is a 1403-residue protein sequence, read N- to C-terminus: MRDLLNLLKQQNQVEEFDSIRIGLASPDMIRAWSYGEVKKPETINYRTFKPERDGLFCAKIFGPVKDYECLCGKYKRLKHRGVICEKCGVEVTLAKVRRERMGHIELASPVAHIWFLKSLPSRISLLLDMTLRDIERVLYFEASVVIDPGMTPLERGQLLADEAYLQAIEEYGDEFDARMGAEAVQKMLKTLDLKGEAIRLREEITGTNSDTKIKKFSKRLKLIEAFIDSGNRSEWMILEVLPVLPPDLRPLVPLEGGRFATSDLNDLYRRVINRNNRLKRLLDLNAPDIIVRNEKRMLQESVDALLDNGRRGRAITGTNKLPLKSLADMIKGKQGRFRQNLLGKRVDYSGRSVIVVGPTLKLHQCGLPKKMALELFKPFIFGKLERAGLATTIKAAKKLVEREGPEVWDVLEEVIREHPVMLNRAPTLHRLGIQAFEPVLIEGKAIQLHPLVCVAFNADFDGDQMAVHVPLSLEAQLEARALMMSTNNILSPANGEPIIVPTQDVVLGLYYMTCERVNAKGEGMLFADINEVRRAYETSIAELHAKISVRITEIDPSKPEGEGETTRLVNTTVGRALLSELLPPGLPFELANKNMTKKEISRLVNICYRRLGLKTSVVFADRLMYLGFRQATLSGISIGVNDMVVPKEKQAILADAEEEVKEIEDQYASGLVTNGERYNKVVDIWSHTNDQVAKAMMERLGSEEVYDAKGNVVKQQTFNSIYMMADSGARGSAAQIRQLAGMRGLMAKPDGSIIETPITANFREGLDVLQYFISTHGARKGLADTALKTANSGYLTRRLVDVAQDLVVTKDDCGTTRGINITPFVEGGDVVEPLRERVLGRVLALNVYVPGSNEVAIPASTLLDESWVDYLETLGIDAVKVRSPITCETRYGICAACYGRDLGRGYRINIGEAIGVIAAQSIGEPGTQLTMRTFHIGGAASRTVTTDRIEVKYKGNIRLHNVKIVQHDSGKYVAVSRSGEVHIVDEQGRERERYKIPYGAELSAGDGDTVESGQVIATWAPHTHPVITEVAGKVRLQDFLEGSTVERQADEVTGLTSLTVLDPKQRGAAVKELRPMVKLVDETGSDLCLAGTDIPAHYYLPAGAVVSVEDEAMVGVGDVLARLPQESSKTRDITGGLPRVADLFEARKPKDPAVLAEISGTVSFGKETKGKQRLIITGSDGERHEELIPKWRQVNVFEGEHVEKGEAIVDGPPVPHDILRLRGVEELTYYIVNEVQEVYRLQGVKINDKHIEVIICQMLRKVEIIEPGDTSFLKGEQIDKPRLLEENEKMEKEDKLPARFEPVLLGITKASLATESFISAASFQETTRVLTEAAVTGKCDELRGLKENVIVGRLIPAGTGLAYHSERRRKRRMLEQPESLTADTGTSHYGEDEISESGAATA.

Zn(2+) is bound by residues C70, C72, C85, and C88. Residues D460, D462, and D464 each contribute to the Mg(2+) site. Residues C814, C888, C895, and C898 each coordinate Zn(2+). Residues 1369–1403 are disordered; that stretch reads RRKRRMLEQPESLTADTGTSHYGEDEISESGAATA. The span at 1379-1388 shows a compositional bias: polar residues; it reads ESLTADTGTS.

It belongs to the RNA polymerase beta' chain family. The RNAP catalytic core consists of 2 alpha, 1 beta, 1 beta' and 1 omega subunit. When a sigma factor is associated with the core the holoenzyme is formed, which can initiate transcription. The cofactor is Mg(2+). It depends on Zn(2+) as a cofactor.

The catalysed reaction is RNA(n) + a ribonucleoside 5'-triphosphate = RNA(n+1) + diphosphate. Its function is as follows. DNA-dependent RNA polymerase catalyzes the transcription of DNA into RNA using the four ribonucleoside triphosphates as substrates. This Nitrosococcus oceani (strain ATCC 19707 / BCRC 17464 / JCM 30415 / NCIMB 11848 / C-107) protein is DNA-directed RNA polymerase subunit beta'.